A 2342-amino-acid chain; its full sequence is Outer kinetochore KNL1 complex subunit KNL1 (2342 aa).

The segment at 1–56 is disordered; it reads MDGVSSEANEENDNIERPVRRRHSSILKPPRSPLQDLRGGNERVQESNALRNKKNS. The tract at residues 1–250 is may mediate oligomerization; that stretch reads MDGVSSEANE…FNDFIKRLKT (250 aa). An interaction with BUB1 and BUB1B region spans residues 1 to 728; it reads MDGVSSEANE…QSLFSTTKPL (728 aa). Interaction with microtubules regions lie at residues 17-34 and 53-80; these read RPVRRRHSSILKPPRSPL and KKNSRRVSFADTIKVFQTESHMKIVRKS. Positions 23–80 are interaction with PP1CA; contains the protein phosphatase 1 (PP1) interaction motifs SILK, RVXF and phi-phi; the sequence is HSSILKPPRSPLQDLRGGNERVQESNALRNKKNSRRVSFADTIKVFQTESHMKIVRKS. Position 24 is a phosphoserine; by AURKB (S24). The residue at position 32 (S32) is a Phosphoserine. S60 bears the Phosphoserine; by AURKB mark. An interaction with BUB1 region spans residues 174 to 190; the sequence is ENQMDLTSSHTVMITKG. The segment at 210–226 is interaction with BUB1B; that stretch reads ANLKLHTEDSRMKKEVN. T539 bears the Phosphothreonine mark. 2 positions are modified to phosphoserine: S578 and S584. T586 is subject to Phosphothreonine. Residues 620 to 646 are disordered; it reads APESTSESHSQSKSSSDECEEITKSRN. Residues 622–633 show a composition bias toward low complexity; the sequence is ESTSESHSQSKS. A Phosphoserine modification is found at S767. Positions 855 to 1201 are 2 X 104 AA approximate repeats; that stretch reads EDESVQKPKF…VTDSHTVFID (347 aa). Residues 885 to 989 form repeat 1; sequence DKTIVFSEDD…MTESHTVFID (105 aa). At T901 the chain carries Phosphothreonine. S956, S1039, S1076, and S1088 each carry phosphoserine. Repeat unit 2 spans residues 1099–1201; the sequence is DKTIVFSENH…VTDSHTVFID (103 aa). Position 1448 is a phosphoserine (S1448). Residues 1639–1662 form a disordered region; it reads SNAKDSRDEENKKSHNGAETTSLP. Over residues 1642 to 1651 the composition is skewed to basic and acidic residues; that stretch reads KDSRDEENKK. Phosphoserine is present on residues S1675 and S1773. The short motif at 1789–1803 is the Nuclear localization signal element; it reads TWVQEEEDIHKEKKI. Residue S1831 is modified to Phosphoserine. Phosphoserine; by TTK occurs at positions 1831 and 1834. 2 positions are modified to phosphoserine: S1845 and S1860. The segment at 1981-2108 is required for interaction with ZWINT; the sequence is KMRHCSDKEL…LLELEVQKEQ (128 aa). The stretch at 2024 to 2133 forms a coiled coil; sequence VQSAQNEREK…EELLDQLSLS (110 aa). Residues 2091 to 2311 are interaction with NSL1, DSN1 and required for assembly into the outer kinetochore; the sequence is EEEELQRNLL…GNTSQDDIAT (221 aa).

As to quaternary structure, component of the KNL1 complex composed of KNL1 and ZWINT. Part of the ten-subunit outer kinetochore KMN network that includes the KNL1, MIS12 and NDC80 complexes; a bioriented kinetochore contains approximately 150 copies of the network. Interacts (via C-terminus) with the MIS12 complex subunits NSL1 (via C-terminus), PMF1 and DSN1; the interaction is direct. Interacts (via N-terminal region) with BUB1B (via BUB1 N-terminal domain); the interaction is direct and is required for cell cycle arrest upon activation of the mitotic spindle assembly checkpoint. Interacts (via N-terminal region) with BUB1 (via BUB1 N-terminal domain); the interaction is direct. Interacts with the protein phosphatase PP1 subunit PPP1CA; the interaction is direct and mutually exclusive with binding to microtubules. Interacts with the protein phosphatase PP1 subunit PPP1CC; the interaction is direct and mutually exclusive with binding to microtubules. Phosphorylation by AURKB negatively regulates its interaction with protein phosphatase 1 (PP1) subunit PPP1CA and with microtubules. Highly expressed in testis, where it is localized in germ cells, in particular in spermatocytes and in the pre-acrosome of round spermatids. Detected in the acrosome of ejaculated spermatozoa. Detected in adult thymus, bone marrow, colon, small intestine, appendix and placenta, and in fetal liver and thymus.

The protein localises to the nucleus. It localises to the chromosome. It is found in the centromere. The protein resides in the kinetochore. Its subcellular location is the cytoplasm. Acts as a component of the outer kinetochore KNL1 complex that serves as a docking point for spindle assembly checkpoint components and mediates microtubule-kinetochore interactions. Kinetochores, consisting of a centromere-associated inner segment and a microtubule-contacting outer segment, play a crucial role in chromosome segregation by mediating the physical connection between centromeric DNA and spindle microtubules. The outer kinetochore is made up of the ten-subunit KMN network, comprising the MIS12, NDC80 and KNL1 complexes, and auxiliary microtubule-associated components; together they connect the outer kinetochore with the inner kinetochore, bind microtubules, and mediate interactions with mitotic checkpoint proteins that delay anaphase until chromosomes are bioriented on the spindle. Required for kinetochore binding by a distinct subset of kMAPs (kinetochore-bound microtubule-associated proteins) and motors. Acts in coordination with CENPK to recruit the NDC80 complex to the outer kinetochore. Can bind either to microtubules or to the protein phosphatase 1 (PP1) catalytic subunits PPP1CA and PPP1CC (via overlapping binding sites), it has higher affinity for PP1. Recruits MAD2L1 to the kinetochore and also directly links BUB1 and BUB1B to the kinetochore. In addition to orienting mitotic chromosomes, it is also essential for alignment of homologous chromosomes during meiotic metaphase I. In meiosis I, required to activate the spindle assembly checkpoint at unattached kinetochores to correct erroneous kinetochore-microtubule attachments. The chain is Outer kinetochore KNL1 complex subunit KNL1 from Homo sapiens (Human).